Reading from the N-terminus, the 218-residue chain is Cell division protein SepF (218 aa).

The disordered stretch occupies residues 20–81 (DDEYYDDRAP…GYRGGYADEP (62 aa)). The segment covering 36-65 (PRFDDDYGRYDGRDYDDARSDSRGDLRGEP) has biased composition (basic and acidic residues).

The protein belongs to the SepF family. As to quaternary structure, homodimer. Interacts with FtsZ.

The protein localises to the cytoplasm. In terms of biological role, cell division protein that is part of the divisome complex and is recruited early to the Z-ring. Probably stimulates Z-ring formation, perhaps through the cross-linking of FtsZ protofilaments. Its function overlaps with FtsA. The protein is Cell division protein SepF of Mycobacterium bovis (strain ATCC BAA-935 / AF2122/97).